A 317-amino-acid chain; its full sequence is Pantothenate kinase (317 aa).

ATP is bound at residue 101–108; that stretch reads GSVAVGKS.

The protein belongs to the prokaryotic pantothenate kinase family.

It localises to the cytoplasm. The catalysed reaction is (R)-pantothenate + ATP = (R)-4'-phosphopantothenate + ADP + H(+). It functions in the pathway cofactor biosynthesis; coenzyme A biosynthesis; CoA from (R)-pantothenate: step 1/5. In Actinobacillus succinogenes (strain ATCC 55618 / DSM 22257 / CCUG 43843 / 130Z), this protein is Pantothenate kinase.